We begin with the raw amino-acid sequence, 120 residues long: Aspartate 1-decarboxylase (120 aa).

Ser-25 (schiff-base intermediate with substrate; via pyruvic acid) is an active-site residue. Ser-25 carries the post-translational modification Pyruvic acid (Ser). Thr-57 contacts substrate. The active-site Proton donor is Tyr-58. A substrate-binding site is contributed by 73-75; the sequence is GAA.

It belongs to the PanD family. In terms of assembly, heterooctamer of four alpha and four beta subunits. Requires pyruvate as cofactor. In terms of processing, is synthesized initially as an inactive proenzyme, which is activated by self-cleavage at a specific serine bond to produce a beta-subunit with a hydroxyl group at its C-terminus and an alpha-subunit with a pyruvoyl group at its N-terminus.

It localises to the cytoplasm. It catalyses the reaction L-aspartate + H(+) = beta-alanine + CO2. It participates in cofactor biosynthesis; (R)-pantothenate biosynthesis; beta-alanine from L-aspartate: step 1/1. Functionally, catalyzes the pyruvoyl-dependent decarboxylation of aspartate to produce beta-alanine. The sequence is that of Aspartate 1-decarboxylase from Deinococcus geothermalis (strain DSM 11300 / CIP 105573 / AG-3a).